The following is a 529-amino-acid chain: AAA ATPase forming ring-shaped complexes (529 aa).

A coiled-coil region spans residues 15–62 (MERQDERLRSLSEANDRLMAKNHALAKALTRATQELTKAKAQLNQLAG). Residue 253–258 (GNGKTL) coordinates ATP.

The protein belongs to the AAA ATPase family. In terms of assembly, homohexamer. Assembles into a hexameric ring structure.

This Bifidobacterium dentium (strain ATCC 27534 / DSM 20436 / JCM 1195 / Bd1) protein is AAA ATPase forming ring-shaped complexes.